A 208-amino-acid polypeptide reads, in one-letter code: Protein-L-isoaspartate O-methyltransferase (208 aa).

Ser-59 is an active-site residue.

Belongs to the methyltransferase superfamily. L-isoaspartyl/D-aspartyl protein methyltransferase family.

The protein localises to the cytoplasm. The catalysed reaction is [protein]-L-isoaspartate + S-adenosyl-L-methionine = [protein]-L-isoaspartate alpha-methyl ester + S-adenosyl-L-homocysteine. In terms of biological role, catalyzes the methyl esterification of L-isoaspartyl residues in peptides and proteins that result from spontaneous decomposition of normal L-aspartyl and L-asparaginyl residues. It plays a role in the repair and/or degradation of damaged proteins. The protein is Protein-L-isoaspartate O-methyltransferase of Cronobacter sakazakii (strain ATCC BAA-894) (Enterobacter sakazakii).